A 152-amino-acid chain; its full sequence is uncharacterized protein (152 aa).

5 consecutive transmembrane segments (helical) span residues 2–22 (GVVF…LKLM), 33–53 (LKMI…WLIM), 58–78 (FLIE…LIYL), 97–117 (FMGN…IEYV), and 122–142 (IASP…FFNC).

Its subcellular location is the cell membrane. This is an uncharacterized protein from Methanocaldococcus jannaschii (strain ATCC 43067 / DSM 2661 / JAL-1 / JCM 10045 / NBRC 100440) (Methanococcus jannaschii).